A 118-amino-acid chain; its full sequence is Putative membrane protein insertion efficiency factor (118 aa).

This sequence belongs to the UPF0161 family.

It is found in the cell inner membrane. Could be involved in insertion of integral membrane proteins into the membrane. This Helicobacter pylori (strain HPAG1) protein is Putative membrane protein insertion efficiency factor.